A 464-amino-acid chain; its full sequence is Argininosuccinate lyase (464 aa).

A2 is subject to N-acetylalanine. K7 carries the N6-acetyllysine modification. A 2-(N(omega)-L-arginino)succinate-binding site is contributed by S27. The residue at position 69 (K69) is an N6-acetyllysine. Positions 114 and 159 each coordinate 2-(N(omega)-L-arginino)succinate. H160 (proton acceptor) is an active-site residue. Catalysis depends on S281, which acts as the Proton donor. K288 bears the N6-acetyllysine mark. N289, Y321, Q326, and K329 together coordinate 2-(N(omega)-L-arginino)succinate.

It belongs to the lyase 1 family. Argininosuccinate lyase subfamily. In terms of assembly, homotetramer. Forms tissue-specific complexes with ASS1, SLC7A1, HSP90AA1 and nitric oxide synthase NOS1, NOS2 or NOS3; the complex maintenance is independent of ASL catalytic function. Post-translationally, acetylation modifies enzyme activity in response to alterations of extracellular nutrient availability. Acetylation increased with trichostin A (TSA) or with nicotinamide (NAM). Glucose increases acetylation by about a factor of 3 with decreasing enzyme activity. Acetylation on Lys-288 is decreased on the addition of extra amino acids resulting in activation of enzyme activity.

The enzyme catalyses 2-(N(omega)-L-arginino)succinate = fumarate + L-arginine. It functions in the pathway amino-acid biosynthesis; L-arginine biosynthesis; L-arginine from L-ornithine and carbamoyl phosphate: step 3/3. It participates in nitrogen metabolism; urea cycle; L-arginine and fumarate from (N(omega)-L-arginino)succinate: step 1/1. Enzyme activity is regulated by acetylation. Functionally, catalyzes the reversible cleavage of L-argininosuccinate to fumarate and L-arginine, an intermediate step reaction in the urea cycle mostly providing for hepatic nitrogen detoxification into excretable urea as well as de novo L-arginine synthesis in nonhepatic tissues. Essential regulator of intracellular and extracellular L-arginine pools. As part of citrulline-nitric oxide cycle, forms tissue-specific multiprotein complexes with argininosuccinate synthase ASS1, transport protein SLC7A1 and nitric oxide synthase NOS1, NOS2 or NOS3, allowing for cell-autonomous L-arginine synthesis while channeling extracellular L-arginine to nitric oxide synthesis pathway. The protein is Argininosuccinate lyase (ASL) of Macaca fascicularis (Crab-eating macaque).